We begin with the raw amino-acid sequence, 549 residues long: Sorting nexin-33 (549 aa).

In terms of domain architecture, SH3 spans 1-61; the sequence is MALKARALYS…PASYVEILRP (61 aa). Over residues 66-83 the composition is skewed to polar residues; the sequence is VQVDYSGHTQGYTDSPHQ. The tract at residues 66-137 is disordered; that stretch reads VQVDYSGHTQ…RPEYTHRPRP (72 aa). A compositionally biased stretch (acidic residues) spans 86-101; it reads YDDDEEDDDDWDDWDD. Positions 110-119 are enriched in polar residues; sequence SGSNGVSRSQ. Positions 127 to 137 are enriched in basic and acidic residues; that stretch reads PRPEYTHRPRP. Positions 205 to 315 constitute a PX domain; sequence FSCSVEEPTK…HFLSCQDEKQ (111 aa). Residues 346–549 enclose the BAR domain; it reads LQDVEERVDV…EKTLHMYDDL (204 aa).

Belongs to the sorting nexin family.

It is found in the cytoplasm. The protein resides in the cytosol. It localises to the membrane. The protein localises to the cytoplasmic vesicle membrane. Plays a role in the reorganization of the cytoskeleton, endocytosis and cellular vesicle trafficking, both during interphase and at the end of mitotic cell divisions. Required for efficient progress through mitosis and cytokinesis. Required for normal formation of the cleavage furrow at the end of mitosis. Modulates endocytosis of cell-surface proteins. Promotes membrane tubulation (in vitro). May promote the formation of macropinosomes. The polypeptide is Sorting nexin-33 (snx33) (Xenopus tropicalis (Western clawed frog)).